The chain runs to 148 residues: Large ribosomal subunit protein uL15 (148 aa).

Residues 1–30 (MPSRLRKTRKLRGHVSHGHGRIGKHRKHPG) show a composition bias toward basic residues. A disordered region spans residues 1–38 (MPSRLRKTRKLRGHVSHGHGRIGKHRKHPGGRGNAGGL). The residue at position 39 (histidine 39) is a (3S)-3-hydroxyhistidine. 2 positions are modified to N6-acetyllysine: lysine 47 and lysine 55. Serine 68 is modified (phosphoserine). N6-acetyllysine is present on lysine 110.

The protein belongs to the universal ribosomal protein uL15 family. Component of the large ribosomal subunit. Hydroxylated on His-39 by MINA.

The protein resides in the cytoplasm. In terms of biological role, component of the large ribosomal subunit. The ribosome is a large ribonucleoprotein complex responsible for the synthesis of proteins in the cell. This Homo sapiens (Human) protein is Large ribosomal subunit protein uL15 (RPL27A).